Consider the following 532-residue polypeptide: Probable cytochrome c oxidase subunit 1 (532 aa).

A run of 8 helical transmembrane segments spans residues 33-53 (IMYI…SLLF), 74-94 (VLIT…ALFG), 95-115 (GFGN…FPRL), 118-138 (ISFW…FVDG), 163-183 (MAIF…INLI), 200-220 (PLFV…MPVL), 252-272 (LFWF…FGIV), and 284-304 (IFGY…GFIV). Fe(II)-heme a is bound at residue H79. Cu cation-binding residues include H258 and Y262. Residues H307 and H308 each coordinate Cu cation. 2 helical membrane-spanning segments follow: residues 318-338 (ALIY…IKIF) and 355-375 (MLFS…GIIL). H393 contributes to the heme a3 binding site. Transmembrane regions (helical) follow at residues 394–414 (FHYT…YYWF), 431–451 (FWIT…LGLA), and 473–493 (IGAG…FYTL). H395 is a binding site for Fe(II)-heme a.

The protein belongs to the heme-copper respiratory oxidase family.

It is found in the cell membrane. It carries out the reaction 4 Fe(II)-[cytochrome c] + O2 + 8 H(+)(in) = 4 Fe(III)-[cytochrome c] + 2 H2O + 4 H(+)(out). The protein operates within energy metabolism; oxidative phosphorylation. In terms of biological role, cytochrome c oxidase is the component of the respiratory chain that catalyzes the reduction of oxygen to water. Subunits 1-3 form the functional core of the enzyme complex. CO I is the catalytic subunit of the enzyme. Electrons originating in cytochrome c are transferred via the copper A center of subunit 2 and heme A of subunit 1 to the bimetallic center formed by heme A3 and copper B. The sequence is that of Probable cytochrome c oxidase subunit 1 (ctaD) from Rickettsia felis (strain ATCC VR-1525 / URRWXCal2) (Rickettsia azadi).